Reading from the N-terminus, the 344-residue chain is Probable dual-specificity RNA methyltransferase RlmN (344 aa).

Glu-92 serves as the catalytic Proton acceptor. In terms of domain architecture, Radical SAM core spans 98 to 325 (DEDRATLCVS…TTIRASRGED (228 aa)). An intrachain disulfide couples Cys-105 to Cys-330. Positions 112, 116, and 119 each coordinate [4Fe-4S] cluster. S-adenosyl-L-methionine contacts are provided by residues 157–158 (GE), Ser-189, 211–213 (SLH), and His-287. Residue Cys-330 is the S-methylcysteine intermediate of the active site.

Belongs to the radical SAM superfamily. RlmN family. [4Fe-4S] cluster is required as a cofactor.

It localises to the cytoplasm. It carries out the reaction adenosine(2503) in 23S rRNA + 2 reduced [2Fe-2S]-[ferredoxin] + 2 S-adenosyl-L-methionine = 2-methyladenosine(2503) in 23S rRNA + 5'-deoxyadenosine + L-methionine + 2 oxidized [2Fe-2S]-[ferredoxin] + S-adenosyl-L-homocysteine. The enzyme catalyses adenosine(37) in tRNA + 2 reduced [2Fe-2S]-[ferredoxin] + 2 S-adenosyl-L-methionine = 2-methyladenosine(37) in tRNA + 5'-deoxyadenosine + L-methionine + 2 oxidized [2Fe-2S]-[ferredoxin] + S-adenosyl-L-homocysteine. Its function is as follows. Specifically methylates position 2 of adenine 2503 in 23S rRNA and position 2 of adenine 37 in tRNAs. This chain is Probable dual-specificity RNA methyltransferase RlmN, found in Bacteroides fragilis (strain ATCC 25285 / DSM 2151 / CCUG 4856 / JCM 11019 / LMG 10263 / NCTC 9343 / Onslow / VPI 2553 / EN-2).